The primary structure comprises 289 residues: Shikimate dehydrogenase (NADP(+)) (289 aa).

Residues 19–21 (SLS) and T66 each bind shikimate. The Proton acceptor role is filled by K70. Shikimate contacts are provided by N91 and D106. NADP(+)-binding positions include 131–135 (GNGGA) and L229. Y231 is a shikimate binding site. G252 provides a ligand contact to NADP(+).

Belongs to the shikimate dehydrogenase family. In terms of assembly, homodimer.

The enzyme catalyses shikimate + NADP(+) = 3-dehydroshikimate + NADPH + H(+). Its pathway is metabolic intermediate biosynthesis; chorismate biosynthesis; chorismate from D-erythrose 4-phosphate and phosphoenolpyruvate: step 4/7. In terms of biological role, involved in the biosynthesis of the chorismate, which leads to the biosynthesis of aromatic amino acids. Catalyzes the reversible NADPH linked reduction of 3-dehydroshikimate (DHSA) to yield shikimate (SA). This Nostoc sp. (strain PCC 7120 / SAG 25.82 / UTEX 2576) protein is Shikimate dehydrogenase (NADP(+)).